The primary structure comprises 1501 residues: RE1-silencing transcription factor A (1501 aa).

A C2H2-type 1 zinc finger spans residues 158-180; the sequence is FRCKPCQYKAESEEEFVHHIKIH. Residues 186–200 are compositionally biased toward basic and acidic residues; the sequence is VDNDSKKNPQGKEAD. Positions 186–209 are disordered; that stretch reads VDNDSKKNPQGKEADSSIPEESDI. 7 consecutive C2H2-type zinc fingers follow at residues 214-236, 246-268, 274-296, 302-324, 330-353, 359-381, and 387-410; these read IQCD…LKHH, YKCT…LRNH, YTCS…IRTH, YQCI…MRTH, FKCE…RQVH, LTCP…VELH, and FLCP…KSRH. Disordered regions lie at residues 491–514, 569–612, 885–929, and 1040–1079; these read SSTQ…SRKS, SFVK…SVAS, PTKV…VPGD, and VAAG…GDEQ. 2 stretches are compositionally biased toward basic and acidic residues: residues 498 to 512 and 594 to 605; these read KASE…DKSR and ITEKKEKGKQLD. Residues 1067–1079 show a composition bias toward polar residues; sequence QPTSVQPPGGDEQ. The segment at 1463–1485 adopts a C2H2-type 9 zinc-finger fold; sequence FVCIFCDRTFRKEEEYTKHLRRH.

The protein resides in the nucleus. It is found in the cytoplasm. Functionally, transcriptional repressor which binds neuron-restrictive silencer element (NRSE) and represses neuronal gene transcription in non-neuronal cells. Plays a role in the early development of the nervous system and is required for proper patterning of the neuroectoderm during gastrulation. This involves the correct speciation of the neuroepithelial domain and adequate development of the non-neural ectoderm. This is RE1-silencing transcription factor A (rest-a) from Xenopus laevis (African clawed frog).